Reading from the N-terminus, the 923-residue chain is MIESTTSHQDFQQRSMTGYALEHPSYRIRGALFRHQDDGRLLSGCGGDIEVIHALELERSQHTCLPVRVTNVVVFGSNDVVRLIQPIEGTEDVIVNGDYHVSIVQSVELFESSTVSKSRILKLPGKIIAVNAEKHSNTELLLVFLLETGIFHYSFCAHTSTHFQCIQAFRCNRPITSGLLWRDSGLLHVAYYDGFVRVGVVHEQYDDMLLVKRVAVNRNNLSVLLDVVFEEIGRIQKFEDTEKQRREDMLTTSKSLSDKLVAEEEVVEGDTTNDDFAKLKIEFKNQSIRCERVSQRLTSLRKLITIIKSALDMNDQIEQMISLLVDELSELEKLEQLCKEVERTGNQNLIGKSWIAVEEKQMVVEELIAKVNSDQIKKHSDVWEQKIDQIIDQLNGCSEAAKDMRLIISQNIFEHRGDKKDVFTHFVLDAQSRDITLYCLSGLTTMAIYPRKGKRVASISLDASFATCLTAACAMKSAEGVYVADQNNVFPTYFYRNRPKAGKGEKRYLDAGNQLQLPTFDSISSILVEPHQMILGSVTGGLLHLSFDFASNYEHFVVASSILAHPISSGSVNCIKLLATGESLLALHCTDTEIVVSEKDQERWHRVTHHTGGAHAIAVTPFSVDERGAFAVVASDTFVRLKVLQYAEESLIGLHDLGESRAEDENGHPIEVLNVSLDPSMQYRQLPCKLRYAVGFADKAIRTYVALLTGQHDFNVQEKFIAQIEPLFNVQNMICFHGRPMGCYVSCAKTLQIWNDLDRHQQKKLKSERMQLLKLSSSVTSMERAEGYLLLGFADDRLSIYEEKGNGAVDLVGTVDDWHKGLNDRIVMSLRTRASKTSCGTRLFIHSLTAHHIVIHTVLVTASKIEQHDFIVAHEHSMSQPIGFEFVSYKYFEFLVYGRGISNEKLSIEDRKRMDNFRDFEFN.

Residues 312 to 347 (DMNDQIEQMISLLVDELSELEKLEQLCKEVERTGNQ) adopt a coiled-coil conformation.

May have a role in tumor suppression. The sequence is that of Protein dct-6 (dct-6) from Caenorhabditis elegans.